A 120-amino-acid chain; its full sequence is NAD(P)H-quinone oxidoreductase subunit 3, chloroplastic (120 aa).

3 helical membrane passes run 9–29, 64–84, and 88–108; these read IFWA…IISG, MFAL…PWAV, and VLGV…VVGS.

This sequence belongs to the complex I subunit 3 family. NDH is composed of at least 16 different subunits, 5 of which are encoded in the nucleus.

It is found in the plastid. Its subcellular location is the chloroplast thylakoid membrane. The enzyme catalyses a plastoquinone + NADH + (n+1) H(+)(in) = a plastoquinol + NAD(+) + n H(+)(out). It catalyses the reaction a plastoquinone + NADPH + (n+1) H(+)(in) = a plastoquinol + NADP(+) + n H(+)(out). Its function is as follows. NDH shuttles electrons from NAD(P)H:plastoquinone, via FMN and iron-sulfur (Fe-S) centers, to quinones in the photosynthetic chain and possibly in a chloroplast respiratory chain. The immediate electron acceptor for the enzyme in this species is believed to be plastoquinone. Couples the redox reaction to proton translocation, and thus conserves the redox energy in a proton gradient. This is NAD(P)H-quinone oxidoreductase subunit 3, chloroplastic from Nuphar advena (Common spatterdock).